The sequence spans 390 residues: UPF0229 protein Cbei_0567 (390 aa).

The interval 77 to 108 (SGVGNEKRGEKLGNGNKKLAKGNQGAGNEEGD) is disordered. Positions 89–103 (GNGNKKLAKGNQGAG) are enriched in low complexity.

Belongs to the UPF0229 family.

This is UPF0229 protein Cbei_0567 from Clostridium beijerinckii (strain ATCC 51743 / NCIMB 8052) (Clostridium acetobutylicum).